The chain runs to 509 residues: Protein disulfide-isomerase (509 aa).

The N-terminal stretch at 1–19 (MLSRSLLCLALAWVARVGA) is a signal peptide. Residues 20-136 (DAPEEEDNVL…IVNWLKKRTG (117 aa)) form the Thioredoxin 1 domain. Active-site nucleophile residues include Cys-55 and Cys-58. Cys-55 and Cys-58 are disulfide-bonded. Residue Lys-202 is modified to N6-acetyllysine. Residues Lys-224 and Lys-273 each carry the N6-succinyllysine modification. Residues Ser-333 and Ser-359 each carry the phosphoserine modification. Residues 335–477 (ELTAEKITEF…FKKFLESGGQ (143 aa)) enclose the Thioredoxin 2 domain. Active-site nucleophile residues include Cys-399 and Cys-402. An intrachain disulfide couples Cys-399 to Cys-402. Ser-429 bears the Phosphoserine mark. The disordered stretch occupies residues 473–509 (ESGGQDGAGDDDDVDLEEALEPDMEEDDDQKAVKDEL). A compositionally biased stretch (acidic residues) spans 480–501 (AGDDDDVDLEEALEPDMEEDDD). Positions 506-509 (KDEL) match the Prevents secretion from ER motif.

It belongs to the protein disulfide isomerase family. In terms of assembly, heterodimer; heterodimerizes with the protein microsomal triglyceride transfer MTTP. Homodimer. Homodimer. Monomers and homotetramers may also occur. Interacts with P4HA2, forming a heterotetramer consisting of 2 alpha subunits (P4HA2) and 2 beta (P4HB), where P4HB plays the role of a structural subunit; this tetramer catalyzes the formation of 4-hydroxyproline in collagen. Also constitutes the structural subunit of the microsomal triacylglycerol transfer protein MTTP in mammalian cells. Stabilizes both enzymes and retain them in the ER without contributing to the catalytic activity. Binds UBQLN1. Interacts with ERO1B. Interacts with ILDR2. Interacts with ERN1/IRE1A (via N-terminus); the interaction is enhanced by phosphorylation of P4HB by FAM20C in response to endoplasmic reticulum stress and results in attenuation of ERN1 activity. Phosphorylation of Ser-359 by FAM20C is induced by endoplasmic reticulum stress and results in a functional switch from oxidoreductase to molecular chaperone. It also promotes interaction with ERN1.

It is found in the endoplasmic reticulum. The protein resides in the endoplasmic reticulum lumen. It localises to the melanosome. The protein localises to the cell membrane. It carries out the reaction Catalyzes the rearrangement of -S-S- bonds in proteins.. Its function is as follows. This multifunctional protein catalyzes the formation, breakage and rearrangement of disulfide bonds. At the cell surface, seems to act as a reductase that cleaves disulfide bonds of proteins attached to the cell. May therefore cause structural modifications of exofacial proteins. Inside the cell, seems to form/rearrange disulfide bonds of nascent proteins. At high concentrations and following phosphorylation by FAM20C, functions as a chaperone that inhibits aggregation of misfolded proteins. At low concentrations, facilitates aggregation (anti-chaperone activity). May be involved with other chaperones in the structural modification of the TG precursor in hormone biogenesis. Also acts as a structural subunit of various enzymes such as prolyl 4-hydroxylase and microsomal triacylglycerol transfer protein MTTP. Receptor for LGALS9; the interaction retains P4HB at the cell surface of Th2 T helper cells, increasing disulfide reductase activity at the plasma membrane, altering the plasma membrane redox state and enhancing cell migration. This is Protein disulfide-isomerase (P4HB) from Cricetulus griseus (Chinese hamster).